A 1712-amino-acid polypeptide reads, in one-letter code: Probable ATP-dependent RNA helicase DDX60 (1712 aa).

A Helicase ATP-binding domain is found at leucine 772–lysine 939. Alanine 785–threonine 792 provides a ligand contact to ATP. A DEVH box motif is present at residues aspartate 889–histidine 892. Residues tyrosine 1226–leucine 1370 enclose the Helicase C-terminal domain.

It belongs to the helicase family. Interacts with EXOSC1, EXOSC4, RIGI, IFIH1/MDA5 and DHX58/LGP2. As to expression, brain, lymph node, prostate, stomach, thyroid, tongue, trachea, uterus, skeletal muscle, spleen, kidney, liver and small intestine.

It localises to the cytoplasm. It catalyses the reaction ATP + H2O = ADP + phosphate + H(+). Its function is as follows. Positively regulates RIGI- and IFIH1/MDA5-dependent type I interferon and interferon inducible gene expression in response to viral infection. Binds ssRNA, dsRNA and dsDNA and can promote the binding of RIGI to dsRNA. Exhibits antiviral activity against hepatitis C virus and vesicular stomatitis virus (VSV). This chain is Probable ATP-dependent RNA helicase DDX60 (DDX60), found in Homo sapiens (Human).